Here is a 536-residue protein sequence, read N- to C-terminus: Putative UDP-glucuronosyltransferase ugt-47 (536 aa).

The N-terminal stretch at 1 to 21 (MMLQTSTILQLLLFLVGSVSA) is a signal peptide. N52 and N308 each carry an N-linked (GlcNAc...) asparagine glycan. Residues 497 to 517 (IIVPVLFVLLYCLIIPFFKLI) traverse the membrane as a helical segment.

The protein belongs to the UDP-glycosyltransferase family.

The protein resides in the membrane. The catalysed reaction is glucuronate acceptor + UDP-alpha-D-glucuronate = acceptor beta-D-glucuronoside + UDP + H(+). In Caenorhabditis briggsae, this protein is Putative UDP-glucuronosyltransferase ugt-47 (ugt-47).